The following is a 380-amino-acid chain: MRIGIVAGELSGDQLGATLVEALKKKYPNAEIEGIGGPKMEAQGFKSLYPMDALSLIGFLEILSKGLSILNIRRKIIKYFKHNKPDIFIGIDAPDFNLTVEKKLRASGIKTIHYVSPKIWVWREYRIKKIRKATDKILAILPFEVEYYKNRHNFEAIYVGHPLAKNISLEIDRSKYKKRLGLENVELPILSVLPGSRTTEVTRLLPLFLDAIEKLQESGYKFKAIMPLAKPSLKPIFDQYNSQIRSLGIEVLETNSHDVLKASDLSLLASGTATLEAMLCKLPMVVGYKLSKLSAFIGRILIRGHSYWAFPNILHKSEIIKELIQEDCTVDNLFYELKRLFDDKQRNNYIVQEFKKIHEHMVVDTEEKIIEVLDSIIEKS.

The protein belongs to the LpxB family.

It catalyses the reaction a lipid X + a UDP-2-N,3-O-bis[(3R)-3-hydroxyacyl]-alpha-D-glucosamine = a lipid A disaccharide + UDP + H(+). The protein operates within bacterial outer membrane biogenesis; LPS lipid A biosynthesis. Condensation of UDP-2,3-diacylglucosamine and 2,3-diacylglucosamine-1-phosphate to form lipid A disaccharide, a precursor of lipid A, a phosphorylated glycolipid that anchors the lipopolysaccharide to the outer membrane of the cell. The sequence is that of Lipid-A-disaccharide synthase from Francisella philomiragia subsp. philomiragia (strain ATCC 25017 / CCUG 19701 / FSC 153 / O#319-036).